We begin with the raw amino-acid sequence, 1481 residues long: Cystic fibrosis transmembrane conductance regulator (1481 aa).

The Cytoplasmic portion of the chain corresponds to 1–77 (MQRSPLEKAS…KLINALRRCF (77 aa)). Residues 78–98 (FWRFMFYGILLYLGEVTKAVQ) traverse the membrane as a helical segment. The ABC transmembrane type-1 1 domain occupies 81–365 (FMFYGILLYL…WAVQTWYDSL (285 aa)). The Extracellular portion of the chain corresponds to 99–122 (PLLLGRIIASYDPDNKEERSIAIY). Residues 123 to 146 (LGIGLCLLFIVRTLLLHPAIFGLH) traverse the membrane as a helical segment. Over 147 to 195 (HIGMQMRIAMFSLIYKKTLKLSSRVLDKISIGQLVSLLSNNLNKFDEGL) the chain is Cytoplasmic. Residues 196-216 (ALAHFVWIVPLQVALLMGLIW) form a helical membrane-spanning segment. The Extracellular portion of the chain corresponds to 217–222 (ELLQAS). A helical transmembrane segment spans residues 223–243 (AFCGLGFLIVLALFQAGLGRM). The Cytoplasmic segment spans residues 244–298 (MMKYRDQRAGKINERLVITSEMIENIQSVKAYCWEEAMEKMIENLRQTELKLTRK). A helical membrane pass occupies residues 299 to 319 (AAYVRYFNSSAFFFSGFFVVF). The Extracellular segment spans residues 320 to 339 (LSVLPYALIKGIVLRKIFTT). A helical membrane pass occupies residues 340–358 (ISFCIVLRMAVTRQFPWAV). The Cytoplasmic portion of the chain corresponds to 359–858 (QTWYDSLGAI…YLRYITVHKS (500 aa)). ATP contacts are provided by residues W401, S434, 458–465 (GSTGAGKT), and Q493. One can recognise an ABC transporter 1 domain in the interval 423–646 (NDDDSLFFSN…RPDFSSKLMG (224 aa)). A lipid anchor (S-palmitoyl cysteine) is attached at C524. Residues S549 and S660 each carry the phosphoserine modification. Residues 654-831 (SAERRNSILT…EEINEEDLKE (178 aa)) are disordered R region. At S670 the chain carries Phosphoserine; by PKA. S686 bears the Phosphoserine mark. Residue K688 forms a Glycyl lysine isopeptide (Lys-Gly) (interchain with G-Cter in ubiquitin) linkage. A phosphoserine mark is found at S700 and S712. The residue at position 717 (T717) is a Phosphothreonine. A phosphoserine mark is found at S737, S753, S768, S790, S795, and S813. The helical transmembrane segment at 859–879 (LIFVLIWCLVIFLAEVAASLV) threads the bilayer. The ABC transmembrane type-1 2 domain maps to 859–1155 (LIFVLIWCLV…AVNSSIDVDS (297 aa)). The Extracellular segment spans residues 880–918 (VLWFLGNTPPQDKGNSTYSRNNSYAVIITRTSSYYVFYI). N-linked (GlcNAc...) asparagine glycosylation is found at N894 and N900. Residues 919 to 939 (YVGVADTLLAMGFFRGLPLVH) form a discontinuously helical membrane-spanning segment. At 940–990 (TLITVSKILHHKMLHSVLQAPMSTLNTLKAGGILNRFSKDIAILDDLLPLT) the chain is on the cytoplasmic side. Residues 991–1011 (IFDFIQLLLIVIGAIAVVAVL) traverse the membrane as a helical segment. Over 1012 to 1013 (QP) the chain is Extracellular. The helical transmembrane segment at 1014–1034 (YIFVATVPVIVAFIMLRAYFL) threads the bilayer. Over 1035 to 1095 (QTSQQLKQLE…TANWFLYLST (61 aa)) the chain is Cytoplasmic. Residues 1096 to 1116 (LRWFQMRIEMIFVIFFIAVTF) traverse the membrane as a helical segment. Over 1117-1130 (ISILTTGEGEGTVG) the chain is Extracellular. A helical membrane pass occupies residues 1131–1151 (IILTLAMNIMSTLQWAVNSSI). At 1152-1481 (DVDSLMRSVS…TEEEVQDTRL (330 aa)) the chain is on the cytoplasmic side. An ABC transporter 2 domain is found at 1211 to 1444 (MTVKDLTAKY…RSLFRQAISP (234 aa)). ATP is bound by residues Y1220 and 1245–1252 (GRTGSGKS). The segment at 1387–1481 (RTLKQAFADC…TEEEVQDTRL (95 aa)) is interaction with GORASP2. The S-palmitoyl cysteine moiety is linked to residue C1396. 2 positions are modified to phosphoserine: S1445 and S1457. A disordered region spans residues 1462–1481 (QPQIAALKEETEEEVQDTRL). Over residues 1471-1481 (ETEEEVQDTRL) the composition is skewed to acidic residues. A PDZ-binding motif is present at residues 1479–1481 (TRL).

Belongs to the ABC transporter superfamily. ABCC family. CFTR transporter (TC 3.A.1.202) subfamily. Monomer; does not require oligomerization for channel activity. May form oligomers in the membrane. Interacts with SLC26A3, SLC26A6 and NHERF1. Interacts with SHANK2. Interacts with MYO6. Interacts (via C-terminus) with GOPC (via PDZ domain); this promotes CFTR internalization and thereby decreases channel activity. Interacts with SLC4A7 through NHERF1. Found in a complex with MYO5B and RAB11A. Interacts with ANO1. Interacts with SLC26A8. Interacts with AHCYL1; the interaction increases CFTR activity. Interacts with CSE1L. The core-glycosylated form interacts with GORASP2 (via PDZ GRASP-type 1 domain) in respone to ER stress. Interacts with MARCHF2; the interaction leads to CFTR ubiqtuitination and degradation. Interacts with ADGRG2. N-glycosylated. In terms of processing, phosphorylated; cAMP treatment promotes phosphorylation and activates the channel. Dephosphorylation decreases the ATPase activity (in vitro). Phosphorylation at PKA sites activates the channel. Phosphorylation at PKC sites enhances the response to phosphorylation by PKA. Phosphorylated by AMPK; this inhibits channel activity. Post-translationally, ubiquitinated, leading to its degradation in the lysosome. Deubiquitination by USP10 in early endosomes enhances its endocytic recycling to the cell membrane. Ubiquitinated by RNF185 during ER stress. Ubiquitinated by MARCHF2.

The protein resides in the apical cell membrane. Its subcellular location is the early endosome membrane. The protein localises to the cell membrane. It localises to the recycling endosome membrane. It is found in the endoplasmic reticulum membrane. The protein resides in the nucleus. It catalyses the reaction ATP + H2O + closed Cl(-) channel = ADP + phosphate + open Cl(-) channel.. It carries out the reaction chloride(in) = chloride(out). The enzyme catalyses hydrogencarbonate(in) = hydrogencarbonate(out). The catalysed reaction is ATP + H2O = ADP + phosphate + H(+). Epithelial ion channel that plays an important role in the regulation of epithelial ion and water transport and fluid homeostasis. Mediates the transport of chloride ions across the cell membrane. Possesses an intrinsic ATPase activity and utilizes ATP to gate its channel; the passive flow of anions through the channel is gated by cycles of ATP binding and hydrolysis by the ATP-binding domains. The ion channel is also permeable to HCO(3)(-); selectivity depends on the extracellular chloride concentration. Exerts its function also by modulating the activity of other ion channels and transporters. Contributes to the regulation of the pH and the ion content of the epithelial fluid layer. Modulates the activity of the epithelial sodium channel (ENaC) complex, in part by regulating the cell surface expression of the ENaC complex. May regulate bicarbonate secretion and salvage in epithelial cells by regulating the transporter SLC4A7. Can inhibit the chloride channel activity of ANO1. Plays a role in the chloride and bicarbonate homeostasis during sperm epididymal maturation and capacitation. The chain is Cystic fibrosis transmembrane conductance regulator from Chlorocebus aethiops (Green monkey).